Reading from the N-terminus, the 138-residue chain is Putative pre-16S rRNA nuclease (138 aa).

It belongs to the YqgF nuclease family.

It localises to the cytoplasm. Functionally, could be a nuclease involved in processing of the 5'-end of pre-16S rRNA. In Glaesserella parasuis serovar 5 (strain SH0165) (Haemophilus parasuis), this protein is Putative pre-16S rRNA nuclease.